Reading from the N-terminus, the 122-residue chain is Protein C10 (122 aa).

The protein belongs to the UPF0456 family.

It is found in the cytoplasm. The sequence is that of Protein C10 from Danio rerio (Zebrafish).